A 426-amino-acid polypeptide reads, in one-letter code: Serine--tRNA ligase (426 aa).

L-serine is bound at residue 235–237; it reads TAE. An ATP-binding site is contributed by 266–268; that stretch reads RRE. An L-serine-binding site is contributed by E289. 353 to 356 contributes to the ATP binding site; it reads EISS. S389 is an L-serine binding site.

This sequence belongs to the class-II aminoacyl-tRNA synthetase family. Type-1 seryl-tRNA synthetase subfamily. As to quaternary structure, homodimer. The tRNA molecule binds across the dimer.

Its subcellular location is the cytoplasm. It carries out the reaction tRNA(Ser) + L-serine + ATP = L-seryl-tRNA(Ser) + AMP + diphosphate + H(+). The catalysed reaction is tRNA(Sec) + L-serine + ATP = L-seryl-tRNA(Sec) + AMP + diphosphate + H(+). The protein operates within aminoacyl-tRNA biosynthesis; selenocysteinyl-tRNA(Sec) biosynthesis; L-seryl-tRNA(Sec) from L-serine and tRNA(Sec): step 1/1. Functionally, catalyzes the attachment of serine to tRNA(Ser). Is also able to aminoacylate tRNA(Sec) with serine, to form the misacylated tRNA L-seryl-tRNA(Sec), which will be further converted into selenocysteinyl-tRNA(Sec). In Trichormus variabilis (strain ATCC 29413 / PCC 7937) (Anabaena variabilis), this protein is Serine--tRNA ligase.